The primary structure comprises 438 residues: MMYAPVEFSEAEFSRAEYQRKQQFWDSVRLALFTLAIVAIIGIAIGIVTHFVVEDDKSFYYLASFKVTNIKYKENYGIRSSREFIERSHQIERMMSRIFRHSSVGGRFIKSHVIKLSPDEQGVDILIVLIFRYPSTDSAEQIKKKIEKALYQSLKTKQLSLTINKPSFRLTPIDSKKMRNLLNSRCGIRMTSSNMPLPASSSTQRIVQGRETAMEGEWPWQASLQLIGSGHQCGASLISNTWLLTAAHCFWKNKDPTQWIATFGATITPPAVKRNVRKIILHENYHRETNENDIALVQLSTGVEFSNIVQRVCLPDSSIKLPPKTSVFVTGFGSIVDDGPIQNTLRQARVETISTDVCNRKDVYDGLITPGMLCAGFMEGKIDACKGDSGGPLVYDNHDIWYIVGIVSWGQSCALPKKPGVYTRVTKYRDWIASKTGM.

The Cytoplasmic portion of the chain corresponds to 1–32 (MMYAPVEFSEAEFSRAEYQRKQQFWDSVRLAL). Residues 33 to 53 (FTLAIVAIIGIAIGIVTHFVV) traverse the membrane as a helical; Signal-anchor for type II membrane protein segment. Residues 54–438 (EDDKSFYYLA…RDWIASKTGM (385 aa)) lie on the Extracellular side of the membrane. In terms of domain architecture, SEA spans 57–175 (KSFYYLASFK…PSFRLTPIDS (119 aa)). Residues 206–437 (IVQGRETAME…YRDWIASKTG (232 aa)) enclose the Peptidase S1 domain. Cys-233 and Cys-249 are disulfide-bonded. Residues His-248 and Asp-293 each act as charge relay system in the active site. Cystine bridges form between Cys-358-Cys-374 and Cys-385-Cys-413. Ser-389 serves as the catalytic Charge relay system.

Belongs to the peptidase S1 family.

Its subcellular location is the membrane. In terms of biological role, probable serine protease. In Homo sapiens (Human), this protein is Transmembrane protease serine 11F (TMPRSS11F).